Reading from the N-terminus, the 206-residue chain is Small ribosomal subunit protein uS2 (206 aa).

Belongs to the universal ribosomal protein uS2 family.

The chain is Small ribosomal subunit protein uS2 from Methanothrix thermoacetophila (strain DSM 6194 / JCM 14653 / NBRC 101360 / PT) (Methanosaeta thermophila).